Reading from the N-terminus, the 387-residue chain is Small ribosomal subunit protein mS31 (387 aa).

A mitochondrion-targeting transit peptide spans M1–S56. 2 disordered regions span residues S59–K83 and K203–S228. Polar residues-rich tracts occupy residues V66–A76 and M207–I217.

Belongs to the mitochondrion-specific ribosomal protein mS31 family. As to quaternary structure, component of the mitochondrial ribosome small subunit (28S) which comprises a 12S rRNA and about 30 distinct proteins.

Its subcellular location is the mitochondrion. The polypeptide is Small ribosomal subunit protein mS31 (Mrps31) (Rattus norvegicus (Rat)).